We begin with the raw amino-acid sequence, 384 residues long: NADP-dependent alcohol dehydrogenase 3 (384 aa).

This sequence belongs to the iron-containing alcohol dehydrogenase family.

It carries out the reaction a primary alcohol + NADP(+) = an aldehyde + NADPH + H(+). In terms of biological role, has NADP-dependent alcohol dehydrogenase activity. The polypeptide is NADP-dependent alcohol dehydrogenase 3 (Entamoeba histolytica (strain ATCC 30459 / HM-1:IMSS / ABRM)).